The chain runs to 107 residues: Protein Rev (107 aa).

Phosphoserine; by host CK2 is present on Ser-5. Residues 18–26 (AIKILYQSN) are homomultimerization. Disordered stretches follow at residues 24–48 (QSNP…WRAR) and 82–107 (HLDC…VGRS). The Nuclear localization signal and RNA-binding (RRE) motif lies at 34–50 (TRQARRNRRRRWRARQR). Over residues 36 to 48 (QARRNRRRRWRAR) the composition is skewed to basic residues. Residues 73–84 (LQLPPLERLHLD) carry the Nuclear export signal and binding to XPO1 motif. The span at 88-101 (DSGTSGTQQPQGTE) shows a compositional bias: polar residues. Residue Ser-92 is modified to Phosphoserine; by host.

Belongs to the HIV-1 REV protein family. As to quaternary structure, homomultimer; when bound to the RRE. Multimeric assembly is essential for activity and may involve XPO1. Binds to human KPNB1, XPO1, TNPO1, RANBP5 and IPO7. Interacts with the viral Integrase. Interacts with human KHDRBS1. Interacts with human NAP1; this interaction decreases Rev multimerization and stimulates its activity. Interacts with human DEAD-box helicases DDX3 and DDX24; these interactions may serve for viral RNA export to the cytoplasm and packaging, respectively. Interacts with human PSIP1; this interaction may inhibit HIV-1 DNA integration by promoting dissociation of the Integrase-LEDGF/p75 complex. Post-translationally, asymmetrically arginine dimethylated at one site by host PRMT6. Methylation impairs the RNA-binding activity and export of viral RNA from the nucleus to the cytoplasm. Phosphorylated by protein kinase CK2. Presence of, and maybe binding to the N-terminus of the regulatory beta subunit of CK2 is necessary for CK2-mediated Rev's phosphorylation.

It localises to the host nucleus. The protein resides in the host nucleolus. It is found in the host cytoplasm. Functionally, escorts unspliced or incompletely spliced viral pre-mRNAs (late transcripts) out of the nucleus of infected cells. These pre-mRNAs carry a recognition sequence called Rev responsive element (RRE) located in the env gene, that is not present in fully spliced viral mRNAs (early transcripts). This function is essential since most viral proteins are translated from unspliced or partially spliced pre-mRNAs which cannot exit the nucleus by the pathway used by fully processed cellular mRNAs. Rev itself is translated from a fully spliced mRNA that readily exits the nucleus. Rev's nuclear localization signal (NLS) binds directly to KPNB1/Importin beta-1 without previous binding to KPNA1/Importin alpha-1. KPNB1 binds to the GDP bound form of RAN (Ran-GDP) and targets Rev to the nucleus. In the nucleus, the conversion from Ran-GDP to Ran-GTP dissociates Rev from KPNB1 and allows Rev's binding to the RRE in viral pre-mRNAs. Rev multimerization on the RRE via cooperative assembly exposes its nuclear export signal (NES) to the surface. Rev can then form a complex with XPO1/CRM1 and Ran-GTP, leading to nuclear export of the complex. Conversion from Ran-GTP to Ran-GDP mediates dissociation of the Rev/RRE/XPO1/RAN complex, so that Rev can return to the nucleus for a subsequent round of export. Beside KPNB1, also seems to interact with TNPO1/Transportin-1, RANBP5/IPO5 and IPO7/RANBP7 for nuclear import. The nucleoporin-like HRB/RIP is an essential cofactor that probably indirectly interacts with Rev to release HIV RNAs from the perinuclear region to the cytoplasm. The protein is Protein Rev of Human immunodeficiency virus type 1 group M subtype G (isolate SE6165) (HIV-1).